The following is a 1443-amino-acid chain: ARF guanine-nucleotide exchange factor GNL1 (1443 aa).

Positions 554–743 constitute an SEC7 domain; it reads FVRKVKHIKK…SEIYHSIRHS (190 aa). The active site involves Glu-658. Disordered stretches follow at residues 917–949 and 1424–1443; these read DDPE…AMPR and DQFQ…GNEV. Positions 939–949 are enriched in polar residues; it reads VSQSQPSAMPR. Positions 1425–1435 are enriched in basic and acidic residues; sequence QFQRRNAKPED.

As to quaternary structure, homodimer.

The protein resides in the cytoplasm. Its subcellular location is the cytosol. It localises to the golgi apparatus membrane. Its function is as follows. Activates the ARF proteins by exchanging bound GDP for free GTP. Plays a role in vesicular protein sorting. Acts as the major regulator of retrograde Golgi to endoplasmic reticulum trafficking but is also involved in the endocytosis process. Could function redundantly with GNOM. Regulates vesicle trafficking required for the coordinated polar localization of auxin efflux carriers which in turn determines the direction of auxin flow. Mediates the endocytosis of PIN2 from plasma membrane to endosomal compartments. Required for maintenance of endoplasmic reticulum morphology. The protein is ARF guanine-nucleotide exchange factor GNL1 (GNL1) of Arabidopsis thaliana (Mouse-ear cress).